Here is a 331-residue protein sequence, read N- to C-terminus: (+)-aristolochene synthase TS1 (331 aa).

The tract at residues 1 to 22 is disordered; it reads MTRMKNSSSNVTSASGSGSGSG. The span at 7-16 shows a compositional bias: low complexity; the sequence is SSSNVTSASG. The Mg(2+) site is built by D102, N231, S235, and E239. Positions 102-106 match the DDxx(x)D/E motif motif; the sequence is DDLLE. The NDxxSxxxD/E motif motif lies at 231–239; sequence NDVYSYEKE. The (2E,6E)-farnesyl diphosphate site is built by R326 and Y327.

Belongs to the terpene synthase family. In terms of assembly, homodimer. The cofactor is Mg(2+).

The enzyme catalyses (2E,6E)-farnesyl diphosphate = (+)-aristolochene + diphosphate. Its pathway is sesquiterpene biosynthesis; aristolochene biosynthesis; aristolochene from farnesyl diphosphate: step 1/1. Catalyzes the cyclization of trans,trans-farnesyl diphosphate (FPP) to the bicyclic sesquiterpene aristolochene. Aristolochene is the likely parent compound for a number of sesquiterpenoid toxins produced by filamentous fungi. The sequence is that of (+)-aristolochene synthase TS1 from Penicillium expansum (Blue mold rot fungus).